The following is a 353-amino-acid chain: Photosystem II D2 protein (353 aa).

An N-acetylthreonine modification is found at T2. T2 is modified (phosphothreonine). The helical transmembrane segment at 41–61 threads the bilayer; sequence CAYFALGGWFTGTTFVTSWYT. H118 is a chlorophyll a binding site. Residues 125-141 traverse the membrane as a helical segment; the sequence is GFMLRQFELARSVQLRP. Residues Q130 and N143 each coordinate pheophytin a. Residues 153-166 traverse the membrane as a helical segment; it reads VFVSVFFIYPLGQS. H198 provides a ligand contact to chlorophyll a. The chain crosses the membrane as a helical span at residues 208 to 228; that stretch reads AALLCAIHGATVENTLFEDGD. Residues H215 and F262 each coordinate a plastoquinone. H215 contacts Fe cation. H269 contributes to the Fe cation binding site. Residues 279–295 form a helical membrane-spanning segment; that stretch reads GLWMSALGVVGLALNLR.

Belongs to the reaction center PufL/M/PsbA/D family. PSII is composed of 1 copy each of membrane proteins PsbA, PsbB, PsbC, PsbD, PsbE, PsbF, PsbH, PsbI, PsbJ, PsbK, PsbL, PsbM, PsbT, PsbX, PsbY, PsbZ, Psb30/Ycf12, at least 3 peripheral proteins of the oxygen-evolving complex and a large number of cofactors. It forms dimeric complexes. The cofactor is The D1/D2 heterodimer binds P680, chlorophylls that are the primary electron donor of PSII, and subsequent electron acceptors. It shares a non-heme iron and each subunit binds pheophytin, quinone, additional chlorophylls, carotenoids and lipids. There is also a Cl(-1) ion associated with D1 and D2, which is required for oxygen evolution. The PSII complex binds additional chlorophylls, carotenoids and specific lipids..

The protein resides in the plastid membrane. The catalysed reaction is 2 a plastoquinone + 4 hnu + 2 H2O = 2 a plastoquinol + O2. Its function is as follows. Photosystem II (PSII) is a light-driven water:plastoquinone oxidoreductase that uses light energy to abstract electrons from H(2)O, generating O(2) and a proton gradient subsequently used for ATP formation. It consists of a core antenna complex that captures photons, and an electron transfer chain that converts photonic excitation into a charge separation. The D1/D2 (PsbA/PsbD) reaction center heterodimer binds P680, the primary electron donor of PSII as well as several subsequent electron acceptors. D2 is needed for assembly of a stable PSII complex. This is Photosystem II D2 protein from Cuscuta exaltata (Tall dodder).